The sequence spans 207 residues: Ras-related protein Rab-8B (207 aa).

GTP is bound by residues serine 17, glycine 18, valine 19, glycine 20, lysine 21, threonine 22, cysteine 23, threonine 35, serine 39, and threonine 40. Residue threonine 22 participates in Mg(2+) binding. Short sequence motifs (switch) lie at residues 31–45 and 63–80; these read DAFN…GIDF and DTAG…YYRG. Positions 40 and 63 each coordinate Mg(2+). A GTP-binding site is contributed by glycine 66. A Phosphothreonine modification is found at threonine 72. 5 residues coordinate GTP: asparagine 121, lysine 122, aspartate 124, alanine 152, and lysine 153. A phosphoserine mark is found at serine 180 and serine 183. Cysteine 204 carries the post-translational modification Cysteine methyl ester. Residue cysteine 204 is the site of S-geranylgeranyl cysteine attachment. A propeptide spans 205–207 (removed in mature form); that stretch reads LLL.

Belongs to the small GTPase superfamily. Rab family. As to quaternary structure, associated with actin, delta-catenin and alpha and beta tubulins. Interacts with OTOF. Interacts with PEX5R. Interacts with RAB3IP. Interacts with VIM. Interacts with CDH1. Interacts with MICALL2. Interacts with GDI1, GDI2, CHML and CHM; phosphorylation at Thr-72 disrupts these interactions. Interacts with MICAL1. It depends on Mg(2+) as a cofactor. Phosphorylation of Thr-72 in the switch II region by LRRK2 prevents the association of RAB regulatory proteins, including CHM, CHML and RAB GDP dissociation inhibitors GDI1 and GDI2.

The protein localises to the cell membrane. It is found in the cytoplasmic vesicle. The protein resides in the phagosome membrane. Its subcellular location is the endosome membrane. It catalyses the reaction GTP + H2O = GDP + phosphate + H(+). Its activity is regulated as follows. Regulated by guanine nucleotide exchange factors (GEFs) including RAB3IP/RABIN8 which promotes the exchange of bound GDP for free GTP. Regulated by GTPase activating proteins (GAPs) which increase the GTP hydrolysis activity. Inhibited by GDP dissociation inhibitors (GDIs). Its function is as follows. The small GTPases Rab are key regulators of intracellular membrane trafficking, from the formation of transport vesicles to their fusion with membranes. Rabs cycle between an inactive GDP-bound form and an active GTP-bound form that is able to recruit to membranes different sets of downstream effectors directly responsible for vesicle formation, movement, tethering and fusion. RAB8B may be involved in polarized vesicular trafficking and neurotransmitter release. May participate in cell junction dynamics in Sertoli cells. May also participate in the export of a subset of neosynthesized proteins through a Rab8-Rab10-Rab11-dependent endososomal export route. This is Ras-related protein Rab-8B (RAB8B) from Bos taurus (Bovine).